The primary structure comprises 896 residues: Glutamate receptor 2.4 (896 aa).

The first 24 residues, 1 to 24 (MKRHLNDVVLVFLVFIFGVKLGKG), serve as a signal peptide directing secretion. Residues 25–565 (QNTTIQVINV…SSLIFFKPLT (541 aa)) are Extracellular-facing. 8 N-linked (GlcNAc...) asparagine glycosylation sites follow: N26, N46, N53, N204, N267, N331, N341, and N527. The helical transmembrane segment at 566–586 (PGLWGMTLGSFFVVGFVVWIL) threads the bilayer. Over 587–595 (EHRVNSEFT) the chain is Cytoplasmic. A helical membrane pass occupies residues 596–616 (GPPQYQISTMFWFAFSIMVFA). Over 617 to 620 (PRER) the chain is Cytoplasmic. A helical transmembrane segment spans residues 621–641 (VMSFTARVVVITWYFIVLVLT). The Extracellular portion of the chain corresponds to 642-815 (QSYTASLSSL…VSFRKLSLDS (174 aa)). A helical membrane pass occupies residues 816 to 836 (FLLLFVAAATVCTLALLKFVI). At 837–896 (CFLIQNRIILNDEFYRGKRMKEMWLKFMESDGESYISRVRSTCPQVLIQPREEDIDPING) the chain is on the cytoplasmic side.

The protein belongs to the glutamate-gated ion channel (TC 1.A.10.1) family. May form heteromers. In terms of tissue distribution, expressed predominantly in roots.

It localises to the membrane. Its function is as follows. Glutamate-gated receptor that probably acts as a non-selective cation channel. May be involved in light-signal transduction and calcium homeostasis via the regulation of calcium influx into cells. This Arabidopsis thaliana (Mouse-ear cress) protein is Glutamate receptor 2.4 (GLR2.4).